A 265-amino-acid chain; its full sequence is UPF0354 protein ABC2771 (265 aa).

It belongs to the UPF0354 family.

In Shouchella clausii (strain KSM-K16) (Alkalihalobacillus clausii), this protein is UPF0354 protein ABC2771.